A 361-amino-acid polypeptide reads, in one-letter code: MNLVEVATTKPYRVRIGSGAVHELAGLVAGRRAAVVCPQTLVHLVPRFGIDDLVVIEVPDAEAAKTPEVLVNGWRRLAEANMTRGDIIVGFGGGATTDVAGFLAATWMRGIDVIHVPTTVLAMADAAIGGKTGVNIPAGKNLVGAFHEPIGVLCDTELLTTLPAREVRSGLAEIVKCGFIKDPVILDVISNHPRLALDVTSQTFVEVLTRAITVKAGVVSADLHERTSSREEVGRERLNYGHTLAHAIEAHKHFTWRHGEADAVGMVFAAELSHRYLGLSDEVVARTRTILSEIGLPVTCDEIKWADLRKTMNVDKKTRVDPQTGRQVLRFVGIHKPGQVAMIVDPDEAALAECYDRCSAR.

Residues 60–65 (DAEAAK), 94–98 (GATTD), 118–119 (TT), Lys131, and Lys140 contribute to the NAD(+) site. Positions 173, 242, and 258 each coordinate Zn(2+).

Belongs to the sugar phosphate cyclases superfamily. Dehydroquinate synthase family. The cofactor is Co(2+). Requires Zn(2+) as cofactor. It depends on NAD(+) as a cofactor.

The protein localises to the cytoplasm. The enzyme catalyses 7-phospho-2-dehydro-3-deoxy-D-arabino-heptonate = 3-dehydroquinate + phosphate. It functions in the pathway metabolic intermediate biosynthesis; chorismate biosynthesis; chorismate from D-erythrose 4-phosphate and phosphoenolpyruvate: step 2/7. Functionally, catalyzes the conversion of 3-deoxy-D-arabino-heptulosonate 7-phosphate (DAHP) to dehydroquinate (DHQ). This Cutibacterium acnes (strain DSM 16379 / KPA171202) (Propionibacterium acnes) protein is 3-dehydroquinate synthase.